Reading from the N-terminus, the 386-residue chain is Manganese dependent endoglucanase Eg5A (386 aa).

Positions 1-17 are cleaved as a signal peptide; sequence MLKYASIALALATLGVA. A CBM1 domain is found at 18 to 53; sequence QQQQWGQCGGIGWTGATTCVAGSVCSVLNPYYSQCI. Residue Glu209 is the Proton donor of the active site. Residue Glu319 is the Nucleophile of the active site. A glycan (N-linked (GlcNAc...) asparagine) is linked at Asn324.

This sequence belongs to the glycosyl hydrolase 5 (cellulase A) family. The cofactor is Mn(2+).

It is found in the secreted. It catalyses the reaction Endohydrolysis of (1-&gt;4)-beta-D-glucosidic linkages in cellulose, lichenin and cereal beta-D-glucans.. Secreted manganese dependent endoglucanase that acts by cleaving the beta-1,4-glucose linkage. Exhibits high activity toward carboxymethyl-cellulose (CMC), barley glucan, and glucomannan. Displays low activity on larminarin and xyloglucan but does not hydrolyze hemicellulose substrates such as birchwood xylan, arabinoxylan, and arabinan. The polypeptide is Manganese dependent endoglucanase Eg5A (Phanerodontia chrysosporium (White-rot fungus)).